The following is a 251-amino-acid chain: Meso-2,3-butanediol dehydrogenase (251 aa).

Residues Asn15, Met17, Asp36, Asp60, Val61, and Asn87 each coordinate NAD(+). Ser138, Ser140, and Tyr151 together coordinate (R)-acetoin. Ser138 serves as a coordination point for (S)-acetoin. Tyr151, Lys155, Val184, and Thr186 together coordinate NAD(+). A (S)-acetoin-binding site is contributed by Tyr151. Tyr151 (proton acceptor) is an active-site residue.

This sequence belongs to the short-chain dehydrogenases/reductases (SDR) family. In terms of assembly, homotetramer; dimer of dimers.

The enzyme catalyses (R,S)-butane-2,3-diol + NAD(+) = (R)-acetoin + NADH + H(+). It carries out the reaction (S,S)-butane-2,3-diol + NAD(+) = (S)-acetoin + NADH + H(+). It catalyses the reaction (S)-acetoin + NAD(+) = diacetyl + NADH + H(+). With respect to regulation, oxidation of meso-2,3-butanediol is enhanced in the presence of Fe(2+). Reduction of diacetyl and (3S/3R)-acetoin is slightly enhanced in the presence of Mg(2+) and Mn(2+). Activity is inhibited by several metal ions, particularly Fe(3+) for reduction of diacetyl and acetoin. Functionally, catalyzes the NAD-dependent oxidation of meso-2,3-butanediol to (3R)-acetoin, and of (2S,3S)-2,3-butanediol to (3S)-acetoin, with much lower efficiency. Can also oxidize several primary alcohols such as glycerol, 1-2-pentanediol and 1,2-propanediol, with lower activity. Cannot use (2R,3R)-2,3-butanediol. In the presence of NADH, catalyzes the reduction of (3R)-acetoin to meso-2,3-butanediol, of (3S)-acetoin to (2S,3S)-2,3-butanediol and of diacetyl to (3S)-acetoin. No activity is detected with NADPH/NADP(+). The sequence is that of Meso-2,3-butanediol dehydrogenase from Serratia marcescens.